The primary structure comprises 252 residues: Imidazole glycerol phosphate synthase subunit HisF (252 aa).

Catalysis depends on residues D11 and D130.

It belongs to the HisA/HisF family. Heterodimer of HisH and HisF.

It is found in the cytoplasm. The catalysed reaction is 5-[(5-phospho-1-deoxy-D-ribulos-1-ylimino)methylamino]-1-(5-phospho-beta-D-ribosyl)imidazole-4-carboxamide + L-glutamine = D-erythro-1-(imidazol-4-yl)glycerol 3-phosphate + 5-amino-1-(5-phospho-beta-D-ribosyl)imidazole-4-carboxamide + L-glutamate + H(+). It participates in amino-acid biosynthesis; L-histidine biosynthesis; L-histidine from 5-phospho-alpha-D-ribose 1-diphosphate: step 5/9. Its function is as follows. IGPS catalyzes the conversion of PRFAR and glutamine to IGP, AICAR and glutamate. The HisF subunit catalyzes the cyclization activity that produces IGP and AICAR from PRFAR using the ammonia provided by the HisH subunit. This is Imidazole glycerol phosphate synthase subunit HisF from Persephonella marina (strain DSM 14350 / EX-H1).